The chain runs to 454 residues: tRNA modification GTPase MnmE (454 aa).

3 residues coordinate (6S)-5-formyl-5,6,7,8-tetrahydrofolate: arginine 23, glutamate 80, and lysine 120. The TrmE-type G domain maps to glycine 216–glycine 377. Asparagine 226 provides a ligand contact to K(+). Residues asparagine 226–serine 231, threonine 245–threonine 251, aspartate 270–glycine 273, and asparagine 335–aspartate 338 contribute to the GTP site. Serine 230 contributes to the Mg(2+) binding site. 3 residues coordinate K(+): threonine 245, isoleucine 247, and threonine 250. Threonine 251 serves as a coordination point for Mg(2+). Position 454 (lysine 454) interacts with (6S)-5-formyl-5,6,7,8-tetrahydrofolate.

Belongs to the TRAFAC class TrmE-Era-EngA-EngB-Septin-like GTPase superfamily. TrmE GTPase family. As to quaternary structure, homodimer. Heterotetramer of two MnmE and two MnmG subunits. Requires K(+) as cofactor.

It localises to the cytoplasm. In terms of biological role, exhibits a very high intrinsic GTPase hydrolysis rate. Involved in the addition of a carboxymethylaminomethyl (cmnm) group at the wobble position (U34) of certain tRNAs, forming tRNA-cmnm(5)s(2)U34. This is tRNA modification GTPase MnmE from Pseudoalteromonas translucida (strain TAC 125).